The sequence spans 127 residues: Small ribosomal subunit protein bS6 (127 aa).

This sequence belongs to the bacterial ribosomal protein bS6 family.

Functionally, binds together with bS18 to 16S ribosomal RNA. The protein is Small ribosomal subunit protein bS6 of Acinetobacter baumannii (strain AB0057).